The primary structure comprises 168 residues: Ribosome maturation factor RimP (168 aa).

The protein belongs to the RimP family.

It is found in the cytoplasm. Required for maturation of 30S ribosomal subunits. This chain is Ribosome maturation factor RimP, found in Mycoplasma mobile (strain ATCC 43663 / 163K / NCTC 11711) (Mesomycoplasma mobile).